The chain runs to 182 residues: ATP-dependent protease subunit HslV (182 aa).

T7 is a catalytic residue. Residues G162, C165, and T168 each contribute to the Na(+) site.

Belongs to the peptidase T1B family. HslV subfamily. In terms of assembly, a double ring-shaped homohexamer of HslV is capped on each side by a ring-shaped HslU homohexamer. The assembly of the HslU/HslV complex is dependent on binding of ATP.

Its subcellular location is the cytoplasm. It catalyses the reaction ATP-dependent cleavage of peptide bonds with broad specificity.. Its activity is regulated as follows. Allosterically activated by HslU binding. Its function is as follows. Protease subunit of a proteasome-like degradation complex believed to be a general protein degrading machinery. The sequence is that of ATP-dependent protease subunit HslV from Legionella pneumophila (strain Lens).